Here is a 497-residue protein sequence, read N- to C-terminus: RNA-splicing ligase RtcB homolog (497 aa).

The Mn(2+) site is built by aspartate 111, cysteine 114, histidine 219, histidine 251, and histidine 345. GMP is bound at residue 218 to 222 (NHYAE). GMP is bound by residues 345–346 (HN), 394–397 (GGTM), serine 401, 420–423 (HGAG), and lysine 496. Histidine 420 (GMP-histidine intermediate) is an active-site residue.

It belongs to the RtcB family. In terms of assembly, catalytic component of the tRNA-splicing ligase complex. Mn(2+) serves as cofactor.

It carries out the reaction a 3'-end 3'-phospho-ribonucleotide-RNA + a 5'-end dephospho-ribonucleoside-RNA + GTP = a ribonucleotidyl-ribonucleotide-RNA + GMP + diphosphate. The catalysed reaction is a 3'-end 2',3'-cyclophospho-ribonucleotide-RNA + a 5'-end dephospho-ribonucleoside-RNA + GTP + H2O = a ribonucleotidyl-ribonucleotide-RNA + GMP + diphosphate + H(+). In terms of biological role, catalytic subunit of the tRNA-splicing ligase complex that acts by directly joining spliced tRNA halves to mature-sized tRNAs by incorporating the precursor-derived splice junction phosphate into the mature tRNA as a canonical 3',5'-phosphodiester. May act as an RNA ligase with broad substrate specificity, and may function toward other RNAs. The protein is RNA-splicing ligase RtcB homolog of Monosiga brevicollis (Choanoflagellate).